A 485-amino-acid chain; its full sequence is Glutamyl-tRNA(Gln) amidotransferase subunit A (485 aa).

Catalysis depends on charge relay system residues K78 and S153. Residue S177 is the Acyl-ester intermediate of the active site.

This sequence belongs to the amidase family. GatA subfamily. Heterotrimer of A, B and C subunits.

The catalysed reaction is L-glutamyl-tRNA(Gln) + L-glutamine + ATP + H2O = L-glutaminyl-tRNA(Gln) + L-glutamate + ADP + phosphate + H(+). In terms of biological role, allows the formation of correctly charged Gln-tRNA(Gln) through the transamidation of misacylated Glu-tRNA(Gln) in organisms which lack glutaminyl-tRNA synthetase. The reaction takes place in the presence of glutamine and ATP through an activated gamma-phospho-Glu-tRNA(Gln). The polypeptide is Glutamyl-tRNA(Gln) amidotransferase subunit A (Bacillus cytotoxicus (strain DSM 22905 / CIP 110041 / 391-98 / NVH 391-98)).